A 201-amino-acid chain; its full sequence is ADP-ribosylation factor-related protein 1 (201 aa).

Methionine 1 bears the N-acetylmethionine mark. Residues 24 to 31 (GLDNAGKT), 75 to 79 (DLGGQ), and 134 to 137 (NKQD) each bind GTP.

The protein belongs to the small GTPase superfamily. Arf family. In terms of assembly, interacts with SYS1.

It is found in the golgi apparatus. The protein resides in the trans-Golgi network. In terms of biological role, trans-Golgi-associated GTPase that regulates protein sorting. Controls the targeting of ARL1 and its effector to the trans-Golgi. Required for the lipidation of chylomicrons in the intestine and required for VLDL lipidation in the liver. The polypeptide is ADP-ribosylation factor-related protein 1 (ARFRP1) (Bos taurus (Bovine)).